We begin with the raw amino-acid sequence, 131 residues long: Small ribosomal subunit protein uS8 (131 aa).

It belongs to the universal ribosomal protein uS8 family. As to quaternary structure, part of the 30S ribosomal subunit. Contacts proteins S5 and S12.

One of the primary rRNA binding proteins, it binds directly to 16S rRNA central domain where it helps coordinate assembly of the platform of the 30S subunit. The sequence is that of Small ribosomal subunit protein uS8 from Erythrobacter litoralis (strain HTCC2594).